We begin with the raw amino-acid sequence, 253 residues long: Protein C1orf43 homolog (253 aa).

Residues 11–31 (VNVVLVMAYGSLVFVLLFIFV) form a helical membrane-spanning segment.

The protein localises to the membrane. It localises to the golgi apparatus. The protein resides in the mitochondrion. Functionally, general regulator of phagocytosis. Required to uptake Gram negative bacterium by macrophages. The polypeptide is Protein C1orf43 homolog (Mus musculus (Mouse)).